The primary structure comprises 319 residues: D-alanine--D-alanine ligase (319 aa).

An ATP-grasp domain is found at 120-315 (KRVLAQAGVP…YPELLRRLVE (196 aa)). 147–198 (DPPFFVKPANTGSSVGISRVERFQDLEAALALAFRYDEKAVVEKALSPVREL) is a binding site for ATP. Residues Asp270, Glu282, and Asn284 each contribute to the Mg(2+) site.

This sequence belongs to the D-alanine--D-alanine ligase family. The cofactor is Mg(2+). Mn(2+) serves as cofactor.

Its subcellular location is the cytoplasm. The enzyme catalyses 2 D-alanine + ATP = D-alanyl-D-alanine + ADP + phosphate + H(+). The protein operates within cell wall biogenesis; peptidoglycan biosynthesis. Cell wall formation. The protein is D-alanine--D-alanine ligase of Thermus thermophilus (strain ATCC 27634 / DSM 579 / HB8).